The primary structure comprises 183 residues: MFRVVHGDITRFKAEAIVNAANKYLEHGGGVAYAIAKAASGDVSEYIRISKEEMRKQIGRDWIEHGEVVVTPPLNLAKNGVKYVIHTVGPYCGGKWDEDKRKKLELAILGALKKADELGVRSIAFPAISAGIYGCPLEEVVKTFKLVVNEFLKSAKNVTDVYLVLYSERDYEVALKVLERDEL.

The region spanning 1–182 (MFRVVHGDIT…VALKVLERDE (182 aa)) is the Macro domain.

This is an uncharacterized protein from Pyrococcus abyssi (strain GE5 / Orsay).